Here is a 372-residue protein sequence, read N- to C-terminus: NAD(P)H-quinone oxidoreductase subunit 1 (372 aa).

8 consecutive transmembrane segments (helical) span residues 29-49 (WLPF…LVTV), 97-117 (LLFT…YLVV), 128-148 (LGVA…GLLM), 176-196 (LALA…IDIV), 204-224 (ILGW…IAVL), 254-274 (FALY…LVAV), 308-328 (TLGI…AVLL), and 351-371 (VALV…FAFG).

The protein belongs to the complex I subunit 1 family. As to quaternary structure, NDH-1 is composed of at least 11 different subunits.

The protein localises to the cellular thylakoid membrane. The catalysed reaction is a plastoquinone + NADH + (n+1) H(+)(in) = a plastoquinol + NAD(+) + n H(+)(out). It catalyses the reaction a plastoquinone + NADPH + (n+1) H(+)(in) = a plastoquinol + NADP(+) + n H(+)(out). NDH-1 shuttles electrons from an unknown electron donor, via FMN and iron-sulfur (Fe-S) centers, to quinones in the respiratory and/or the photosynthetic chain. The immediate electron acceptor for the enzyme in this species is believed to be plastoquinone. Couples the redox reaction to proton translocation, and thus conserves the redox energy in a proton gradient. The polypeptide is NAD(P)H-quinone oxidoreductase subunit 1 (Trichodesmium erythraeum (strain IMS101)).